Consider the following 407-residue polypeptide: Tryptophan synthase beta chain (407 aa).

N6-(pyridoxal phosphate)lysine is present on lysine 91.

Belongs to the TrpB family. In terms of assembly, tetramer of two alpha and two beta chains. Pyridoxal 5'-phosphate serves as cofactor.

It carries out the reaction (1S,2R)-1-C-(indol-3-yl)glycerol 3-phosphate + L-serine = D-glyceraldehyde 3-phosphate + L-tryptophan + H2O. Its pathway is amino-acid biosynthesis; L-tryptophan biosynthesis; L-tryptophan from chorismate: step 5/5. The beta subunit is responsible for the synthesis of L-tryptophan from indole and L-serine. The chain is Tryptophan synthase beta chain from Streptococcus pneumoniae serotype 2 (strain D39 / NCTC 7466).